A 95-amino-acid polypeptide reads, in one-letter code: Co-chaperonin GroES (95 aa).

It belongs to the GroES chaperonin family. Heptamer of 7 subunits arranged in a ring. Interacts with the chaperonin GroEL.

It localises to the cytoplasm. In terms of biological role, together with the chaperonin GroEL, plays an essential role in assisting protein folding. The GroEL-GroES system forms a nano-cage that allows encapsulation of the non-native substrate proteins and provides a physical environment optimized to promote and accelerate protein folding. GroES binds to the apical surface of the GroEL ring, thereby capping the opening of the GroEL channel. This is Co-chaperonin GroES from Desulfatibacillum aliphaticivorans.